Consider the following 484-residue polypeptide: Argininosuccinate lyase (484 aa).

The protein belongs to the lyase 1 family. Argininosuccinate lyase subfamily.

Its subcellular location is the cytoplasm. It carries out the reaction 2-(N(omega)-L-arginino)succinate = fumarate + L-arginine. It participates in amino-acid biosynthesis; L-arginine biosynthesis; L-arginine from L-ornithine and carbamoyl phosphate: step 3/3. This is Argininosuccinate lyase from Methanocaldococcus jannaschii (strain ATCC 43067 / DSM 2661 / JAL-1 / JCM 10045 / NBRC 100440) (Methanococcus jannaschii).